A 407-amino-acid polypeptide reads, in one-letter code: Phosphopentomutase (407 aa).

Positions 10, 306, 311, 347, 348, and 359 each coordinate Mn(2+).

It belongs to the phosphopentomutase family. It depends on Mn(2+) as a cofactor.

The protein resides in the cytoplasm. The enzyme catalyses 2-deoxy-alpha-D-ribose 1-phosphate = 2-deoxy-D-ribose 5-phosphate. The catalysed reaction is alpha-D-ribose 1-phosphate = D-ribose 5-phosphate. It participates in carbohydrate degradation; 2-deoxy-D-ribose 1-phosphate degradation; D-glyceraldehyde 3-phosphate and acetaldehyde from 2-deoxy-alpha-D-ribose 1-phosphate: step 1/2. In terms of biological role, isomerase that catalyzes the conversion of deoxy-ribose 1-phosphate (dRib-1-P) and ribose 1-phosphate (Rib-1-P) to deoxy-ribose 5-phosphate (dRib-5-P) and ribose 5-phosphate (Rib-5-P), respectively. This is Phosphopentomutase from Erwinia tasmaniensis (strain DSM 17950 / CFBP 7177 / CIP 109463 / NCPPB 4357 / Et1/99).